A 359-amino-acid chain; its full sequence is 3-dehydroquinate synthase (359 aa).

NAD(+)-binding positions include 69 to 74 (DGEKYK), 103 to 107 (GVVGD), 127 to 128 (TT), K140, K149, and 167 to 170 (TLDT). Positions 182, 245, and 262 each coordinate Zn(2+).

The protein belongs to the sugar phosphate cyclases superfamily. Dehydroquinate synthase family. Co(2+) is required as a cofactor. The cofactor is Zn(2+). NAD(+) serves as cofactor.

Its subcellular location is the cytoplasm. It catalyses the reaction 7-phospho-2-dehydro-3-deoxy-D-arabino-heptonate = 3-dehydroquinate + phosphate. Its pathway is metabolic intermediate biosynthesis; chorismate biosynthesis; chorismate from D-erythrose 4-phosphate and phosphoenolpyruvate: step 2/7. Catalyzes the conversion of 3-deoxy-D-arabino-heptulosonate 7-phosphate (DAHP) to dehydroquinate (DHQ). The protein is 3-dehydroquinate synthase of Ruthia magnifica subsp. Calyptogena magnifica.